Here is a 962-residue protein sequence, read N- to C-terminus: Protein kinase ORF73 (962 aa).

Disordered stretches follow at residues 1 to 28 (MADR…NDRP) and 62 to 152 (STPA…RATT). Acidic residues predominate over residues 81-90 (DSDDDDEEDN). A compositionally biased stretch (polar residues) spans 143–152 (YDTTGRRATT). Positions 301-595 (LRAAPVLGKG…ASDLLKSPRY (295 aa)) constitute a Protein kinase domain. ATP-binding positions include 307–315 (LGKGYFGTV) and lysine 324. The active-site Proton acceptor is the aspartate 434.

Belongs to the protein kinase superfamily. Ser/Thr protein kinase family.

It carries out the reaction L-seryl-[protein] + ATP = O-phospho-L-seryl-[protein] + ADP + H(+). It catalyses the reaction L-threonyl-[protein] + ATP = O-phospho-L-threonyl-[protein] + ADP + H(+). The chain is Protein kinase ORF73 (ORF73) from Ictaluridae (bullhead catfishes).